Consider the following 77-residue polypeptide: MPKGKNLHVKIGDNVKIISGFDKNKTGEVTKIYRNTGKILVKGINFKFKHIKPNTESDVGEIKQFEAPIHHSNVKLI.

The protein belongs to the universal ribosomal protein uL24 family. Part of the 50S ribosomal subunit.

It is found in the plastid. The protein localises to the chloroplast. Its function is as follows. One of two assembly initiator proteins, it binds directly to the 5'-end of the 23S rRNA, where it nucleates assembly of the 50S subunit. In Thalassiosira pseudonana (Marine diatom), this protein is Large ribosomal subunit protein uL24c (rpl24).